A 278-amino-acid chain; its full sequence is 2-heptyl-3-hydroxy-4-quinolone dioxygenase AqdC1 (278 aa).

The AB hydrolase-1 domain maps to 29–158 (PTIVMLPGWC…GWVDSCRALF (130 aa)). Residue His103 coordinates substrate. The Proton donor/acceptor role is filled by His250.

The protein belongs to the AB hydrolase superfamily.

The catalysed reaction is 2-heptyl-3-hydroxy-4(1H)-quinolone + O2 = N-octanoylanthranilate + CO + H(+). In terms of biological role, involved in the degradation of the Pseudomonas aeruginosa quorum sensing signal molecules HHQ (2-heptyl-4-quinolone) and PQS (2-heptyl-3-hydroxy-4-quinolone) to anthranilic acid. Catalyzes the cleavage of PQS to form N-octanoylanthranilic acid and carbon monoxide. This chain is 2-heptyl-3-hydroxy-4-quinolone dioxygenase AqdC1, found in Rhodococcus erythropolis (Arthrobacter picolinophilus).